The following is a 1215-amino-acid chain: von Willebrand factor A domain-containing protein 5B1 (1215 aa).

Residues 1 to 18 form the signal peptide; sequence MPGLLNCLTGAALPLMES. The VIT domain occupies 19-141; that stretch reads DVTSYVSGYA…NVTVFISTSS (123 aa). Residue N132 is glycosylated (N-linked (GlcNAc...) asparagine). The 180-residue stretch at 353–532 folds into the VWFA domain; it reads EFIFLIDRSN…KAMAPVLSDV (180 aa). The tract at residues 595-674 is disordered; sequence SVFYPSQDEG…DPTGTARRYP (80 aa). Polar residues-rich tracts occupy residues 608–621 and 646–667; these read GSGN…QGQT and YSTN…SDPT. Y879 carries the post-translational modification Phosphotyrosine. 3 disordered regions span residues 934–953, 964–999, and 1100–1121; these read GSSA…SSAA, QDSP…APSS, and SPQD…SLKS. Polar residues-rich tracts occupy residues 964-975, 990-999, and 1100-1112; these read QDSPTSTFNKTP, QNLSASAPSS, and SPQD…SSPP.

The protein resides in the secreted. In Mus musculus (Mouse), this protein is von Willebrand factor A domain-containing protein 5B1 (Vwa5b1).